Consider the following 604-residue polypeptide: Microtubule-associated protein 70-4 (604 aa).

The segment at 1-33 (MEERGFMSPSLAISASYREGGSKGMSRRRSMRP) is disordered. The stretch at 49 to 351 (DPVRIELNRL…ADRAAKSEAQ (303 aa)) forms a coiled coil. Residues 233-470 (IIDKMHRQKV…PLNHKSSEGT (238 aa)) are required for targeting to microtubules. Disordered regions lie at residues 367-422 (LKGP…RSLT) and 434-495 (GTSR…NDSV). The span at 371–385 (TSSSSRGTSVGRSSS) shows a compositional bias: low complexity. Polar residues-rich tracts occupy residues 401 to 422 (PKITSNGSLIKRTPSSQLRSLT) and 468 to 478 (EGTSRGESPSS). Residues 521-569 (LRDKDEAIEMLAKKVETLTKAMDVEAKKMRREVAVMGKEVAAMRVVDKG) are a coiled coil.

The protein belongs to the MAP70 family.

The protein resides in the cytoplasm. It is found in the cytoskeleton. Plant-specific protein that interact with microtubules. The polypeptide is Microtubule-associated protein 70-4 (MAP70.4) (Arabidopsis thaliana (Mouse-ear cress)).